Reading from the N-terminus, the 94-residue chain is MEAQFIADIYAATAIGVGVILAAAGLGSAIGWGLICSKTLEGIARQPEMRPALMTNMFIFAGLMESFPFIILAFAMWFLFANPFVGAMQAALGA.

Transmembrane regions (helical) follow at residues 15–35 (IGVG…WGLI) and 58–78 (FIFA…AMWF).

It belongs to the ATPase C chain family. As to quaternary structure, F-type ATPases have 2 components, F(1) - the catalytic core - and F(0) - the membrane proton channel. F(1) has five subunits: alpha(3), beta(3), gamma(1), delta(1), epsilon(1). F(0) has three main subunits: a(1), b(2) and c(10-14). The alpha and beta chains form an alternating ring which encloses part of the gamma chain. F(1) is attached to F(0) by a central stalk formed by the gamma and epsilon chains, while a peripheral stalk is formed by the delta and b chains.

The protein localises to the cell inner membrane. Its function is as follows. F(1)F(0) ATP synthase produces ATP from ADP in the presence of a proton or sodium gradient. F-type ATPases consist of two structural domains, F(1) containing the extramembraneous catalytic core and F(0) containing the membrane proton channel, linked together by a central stalk and a peripheral stalk. During catalysis, ATP synthesis in the catalytic domain of F(1) is coupled via a rotary mechanism of the central stalk subunits to proton translocation. Functionally, key component of the F(0) channel; it plays a direct role in translocation across the membrane. A homomeric c-ring of between 10-14 subunits forms the central stalk rotor element with the F(1) delta and epsilon subunits. This is ATP synthase subunit c from Hydrogenovibrio crunogenus (strain DSM 25203 / XCL-2) (Thiomicrospira crunogena).